Reading from the N-terminus, the 189-residue chain is Proline-rich protein 29 (189 aa).

Residues 152–189 (SREREVRAVPPPPPPSATGTVGADVPPASDYYDAESLL) form a disordered region.

The sequence is that of Proline-rich protein 29 (PRR29) from Homo sapiens (Human).